A 331-amino-acid polypeptide reads, in one-letter code: 6-phosphogluconolactonase (331 aa).

The protein belongs to the cycloisomerase 2 family.

The enzyme catalyses 6-phospho-D-glucono-1,5-lactone + H2O = 6-phospho-D-gluconate + H(+). Its pathway is carbohydrate degradation; pentose phosphate pathway; D-ribulose 5-phosphate from D-glucose 6-phosphate (oxidative stage): step 2/3. Functionally, catalyzes the hydrolysis of 6-phosphogluconolactone to 6-phosphogluconate. In Klebsiella pneumoniae subsp. pneumoniae (strain ATCC 700721 / MGH 78578), this protein is 6-phosphogluconolactonase.